The sequence spans 306 residues: Pantothenate kinase (306 aa).

91 to 98 (GSVAVGKS) is a binding site for ATP.

It belongs to the prokaryotic pantothenate kinase family.

The protein localises to the cytoplasm. The enzyme catalyses (R)-pantothenate + ATP = (R)-4'-phosphopantothenate + ADP + H(+). It functions in the pathway cofactor biosynthesis; coenzyme A biosynthesis; CoA from (R)-pantothenate: step 1/5. This Streptococcus pneumoniae (strain JJA) protein is Pantothenate kinase.